The following is a 394-amino-acid chain: Guanine nucleotide-binding protein G(s) subunit alpha (394 aa).

The interval Met-1–Asn-23 is disordered. Gly-2 carries N-palmitoyl glycine lipidation. A lipid anchor (S-palmitoyl cysteine) is attached at Cys-3. The span at Lys-8–Asn-23 shows a compositional bias: basic and acidic residues. In terms of domain architecture, G-alpha spans Ala-39 to Leu-394. A G1 motif region spans residues Arg-42–Thr-55. Position 47–55 (Gly-47–Thr-55) interacts with GTP. Ser-54 contacts Mg(2+). Positions Phe-68 to Lys-91 are disordered. A G2 motif region spans residues Asp-196–Thr-204. Residues Leu-197–Thr-204, Asp-223–Gln-227, Asn-292–Asp-295, and Ala-366 each bind GTP. Thr-204 lines the Mg(2+) pocket. Residues Phe-219–Arg-228 form a G3 motif region. The segment at Ile-288–Asp-295 is G4 motif. A G5 motif region spans residues Thr-364–Thr-369.

It belongs to the G-alpha family. G(s) subfamily. In terms of assembly, heterotrimeric G proteins are composed of 3 units; alpha, beta and gamma. The alpha chain contains the guanine nucleotide binding site. Interacts with CRY1; the interaction may block GPCR-mediated regulation of cAMP concentrations. Interacts with ADCY6 and stimulates its adenylyl cyclase activity. Interacts with ADCY2 and ADCY5. Stimulates the ADCY5 adenylyl cyclase activity. Interaction with SASH1.

The protein resides in the cell membrane. Guanine nucleotide-binding proteins (G proteins) function as transducers in numerous signaling pathways controlled by G protein-coupled receptors (GPCRs). Signaling involves the activation of adenylyl cyclases, resulting in increased levels of the signaling molecule cAMP. GNAS functions downstream of several GPCRs, including beta-adrenergic receptors. Stimulates the Ras signaling pathway via RAPGEF2. This Canis lupus familiaris (Dog) protein is Guanine nucleotide-binding protein G(s) subunit alpha (GNAS).